The following is a 112-amino-acid chain: Peptidyl-tRNA hydrolase (112 aa).

A disordered region spans residues 64 to 99; it reads EEAKRAGLPTGLISDAGRTQLEPGTPTALAIGPAPD.

The protein belongs to the PTH2 family.

It localises to the cytoplasm. The catalysed reaction is an N-acyl-L-alpha-aminoacyl-tRNA + H2O = an N-acyl-L-amino acid + a tRNA + H(+). In terms of biological role, the natural substrate for this enzyme may be peptidyl-tRNAs which drop off the ribosome during protein synthesis. The protein is Peptidyl-tRNA hydrolase of Halobacterium salinarum (strain ATCC 29341 / DSM 671 / R1).